A 490-amino-acid polypeptide reads, in one-letter code: ATP synthase subunit beta, chloroplastic (490 aa).

170–177 contributes to the ATP binding site; the sequence is GGXGVGKT.

Belongs to the ATPase alpha/beta chains family. As to quaternary structure, F-type ATPases have 2 components, CF(1) - the catalytic core - and CF(0) - the membrane proton channel. CF(1) has five subunits: alpha(3), beta(3), gamma(1), delta(1), epsilon(1). CF(0) has four main subunits: a(1), b(1), b'(1) and c(9-12).

Its subcellular location is the plastid. It is found in the chloroplast thylakoid membrane. The enzyme catalyses ATP + H2O + 4 H(+)(in) = ADP + phosphate + 5 H(+)(out). In terms of biological role, produces ATP from ADP in the presence of a proton gradient across the membrane. The catalytic sites are hosted primarily by the beta subunits. The sequence is that of ATP synthase subunit beta, chloroplastic from Ipomoea coccinea (Scarlet morning-glory).